The chain runs to 1812 residues: Putative surface cell antigen sca2 (1812 aa).

A signal peptide spans 1-17 (MSTCLLTSSFLSTSARA). Composition is skewed to polar residues over residues 344–357 (FLNN…STGR) and 371–382 (MSNQSIHNTGTS). 3 disordered regions span residues 344 to 382 (FLNN…TGTS), 648 to 691 (LEQT…QGFS), and 1338 to 1462 (KQEN…KKDV). Positions 656–685 (PNPPPLPLNGGIPNPPPLPLNGSMPPPPPL) are enriched in pro residues. Composition is skewed to basic and acidic residues over residues 1349–1367 (STKD…EQSD) and 1382–1393 (SKNDKSSDDKKS). The segment covering 1401–1416 (DEDDTGYATDEEELEE) has biased composition (acidic residues). The span at 1417–1455 (SNSTTNEELEESNSTTNEELEESNSTTNEELEESNSTTN) shows a compositional bias: low complexity. The Autotransporter domain maps to 1533-1812 (ETSINRGVWI…QGLIKLKVNL (280 aa)).

It localises to the cell outer membrane. The sequence is that of Putative surface cell antigen sca2 (sca2) from Rickettsia sibirica (strain ATCC VR-151 / 246).